The following is a 248-amino-acid chain: ATP synthase delta chain, chloroplastic (248 aa).

Residues 1–60 constitute a chloroplast transit peptide; that stretch reads MAALQQTPITFQSRSPPPTQIISGPTAKLSFSGGLKLPKLTIKLRSNRTSRRGGGAAGSK.

This sequence belongs to the ATPase delta chain family. F-type ATPases have 2 components, CF(1) - the catalytic core - and CF(0) - the membrane proton channel. CF(1) has five subunits: alpha(3), beta(3), gamma(1), delta(1), epsilon(1). CF(0) has three main subunits: a, b and c.

Its subcellular location is the plastid. The protein resides in the chloroplast thylakoid membrane. In terms of biological role, this protein seems to be part of the stalk that links CF(0) to CF(1). It either transmits conformational changes from CF(0) into CF(1) or is implicated in proton conduction. In Nicotiana tabacum (Common tobacco), this protein is ATP synthase delta chain, chloroplastic (ATPD).